The following is a 324-amino-acid chain: HTH-type transcriptional regulator CysB (324 aa).

The HTH lysR-type domain maps to 1–59 (MKLQQLRYIVEVVNHNLNVSSTAEGLYTSQPGISKQVRMLEDELGIQIFARSGKHLTQV). The segment at residues 19 to 38 (VSSTAEGLYTSQPGISKQVR) is a DNA-binding region (H-T-H motif).

It belongs to the LysR transcriptional regulatory family. Homotetramer.

The protein resides in the cytoplasm. Functionally, this protein is a positive regulator of gene expression for the cysteine regulon, a system of 10 or more loci involved in the biosynthesis of L-cysteine from inorganic sulfate. The inducer for CysB is N-acetylserine. CysB inhibits its own transcription. This chain is HTH-type transcriptional regulator CysB (cysB), found in Salmonella typhimurium (strain LT2 / SGSC1412 / ATCC 700720).